Here is a 982-residue protein sequence, read N- to C-terminus: Little elongation complex subunit 2 (982 aa).

2 positions are modified to phosphoserine: serine 17 and serine 326. The span at 410–427 shows a compositional bias: polar residues; it reads TTKVSKSPSPASTSTVPN. Disordered regions lie at residues 410–450 and 473–504; these read TTKV…PDIS and GMDGGPEECKNKDDQGFESCEKVSNSDKPLIQ. The span at 479–497 shows a compositional bias: basic and acidic residues; sequence EECKNKDDQGFESCEKVSN. Serine 571 carries the post-translational modification Phosphoserine. Threonine 573 bears the Phosphothreonine mark. 3 disordered regions span residues 595–623, 672–697, and 930–982; these read VGSNLSSRPASPNSSSGQASVGNQTNTAC, ENSKQPSVSEQLSGPSDSSSWPKSGW, and PKSL…RKIT. Residues 597–610 show a composition bias toward low complexity; the sequence is SNLSSRPASPNSSS. 2 stretches are compositionally biased toward polar residues: residues 611–623 and 672–683; these read GQASVGNQTNTAC and ENSKQPSVSEQL. The span at 684-697 shows a compositional bias: low complexity; that stretch reads SGPSDSSSWPKSGW. Positions 956 to 970 are enriched in polar residues; it reads SMETKSSCLPAQQVE.

The protein belongs to the ICE2 family. As to quaternary structure, component of the little elongation complex (LEC), at least composed of ELL (ELL, ELL2 or ELL3), ZC3H8, ICE1 and ICE2. Interacts with ICE1 (via C-terminus domain). Interacts with ELL. As to expression, expressed at low levels in lung and testis.

Its subcellular location is the nucleus. Functionally, component of the little elongation complex (LEC), a complex required to regulate small nuclear RNA (snRNA) gene transcription by RNA polymerase II and III. This chain is Little elongation complex subunit 2 (ICE2), found in Homo sapiens (Human).